The following is an 80-amino-acid chain: Small ribosomal subunit protein bS18 (80 aa).

This sequence belongs to the bacterial ribosomal protein bS18 family. As to quaternary structure, part of the 30S ribosomal subunit. Forms a tight heterodimer with protein bS6.

Functionally, binds as a heterodimer with protein bS6 to the central domain of the 16S rRNA, where it helps stabilize the platform of the 30S subunit. The polypeptide is Small ribosomal subunit protein bS18 (Staphylococcus aureus (strain Mu3 / ATCC 700698)).